Here is a 610-residue protein sequence, read N- to C-terminus: Lipoprotein LpqB (610 aa).

A signal peptide spans 1–27; it reads MGAEGGGRRRALRLGAYVGCGAVLLTG. The N-palmitoyl cysteine moiety is linked to residue C28. The S-diacylglycerol cysteine moiety is linked to residue C28.

Belongs to the LpqB lipoprotein family.

It is found in the cell membrane. This Streptomyces avermitilis (strain ATCC 31267 / DSM 46492 / JCM 5070 / NBRC 14893 / NCIMB 12804 / NRRL 8165 / MA-4680) protein is Lipoprotein LpqB.